A 307-amino-acid polypeptide reads, in one-letter code: MSGKAGFTPEDPEDSDNRHGNPLFEGIFTALNWMTVLPVPGASVFDRTTGARVMASLPFVGFVFGMFTAIIMWAIGPISGVIHVDGLLVAVLIVAFWELLNRFMHLDGLADVSDALGSYAAPPRAREILADPRTGLFGLATAMLSVLLQVAAVASLVDSTVWWMICFIPVLGRIAGQVTALKNHNAFSPTGFGALVIGTVKFWWIALWLLVTAALAFWCAELISPLSPLTSVNTPFVAGPFPAAINPAWLGGWVAITAVVACVFAALFSRRLSRSFGGLNGDCIGACIHLGASISAVMFAVVANAMV.

8 helical membrane passes run 22–42, 58–78, 80–100, 137–157, 161–181, 212–232, 248–268, and 283–303; these read PLFE…VPGA, PFVG…IGPI, GVIH…WELL, FGLA…ASLV, VWWM…VTAL, TAAL…LTSV, AWLG…AALF, and CIGA…AVVA.

The protein belongs to the CobS family. Requires Mg(2+) as cofactor.

It is found in the cell membrane. The catalysed reaction is alpha-ribazole + adenosylcob(III)inamide-GDP = adenosylcob(III)alamin + GMP + H(+). It catalyses the reaction alpha-ribazole 5'-phosphate + adenosylcob(III)inamide-GDP = adenosylcob(III)alamin 5'-phosphate + GMP + H(+). The protein operates within cofactor biosynthesis; adenosylcobalamin biosynthesis; adenosylcobalamin from cob(II)yrinate a,c-diamide: step 7/7. Functionally, joins adenosylcobinamide-GDP and alpha-ribazole to generate adenosylcobalamin (Ado-cobalamin). Also synthesizes adenosylcobalamin 5'-phosphate from adenosylcobinamide-GDP and alpha-ribazole 5'-phosphate. In Corynebacterium glutamicum (strain ATCC 13032 / DSM 20300 / JCM 1318 / BCRC 11384 / CCUG 27702 / LMG 3730 / NBRC 12168 / NCIMB 10025 / NRRL B-2784 / 534), this protein is Adenosylcobinamide-GDP ribazoletransferase.